Consider the following 158-residue polypeptide: Ribosome maturation factor RimP (158 aa).

Belongs to the RimP family.

The protein resides in the cytoplasm. Its function is as follows. Required for maturation of 30S ribosomal subunits. This chain is Ribosome maturation factor RimP, found in Lactiplantibacillus plantarum (strain ATCC BAA-793 / NCIMB 8826 / WCFS1) (Lactobacillus plantarum).